The following is a 593-amino-acid chain: Pentatricopeptide repeat-containing protein At5g24830 (593 aa).

PPR repeat units follow at residues Cys-120–Pro-154, Gly-155–Pro-189, Asn-190–Pro-224, Asn-225–Ser-256, Asp-264–Ala-298, Asp-299–Pro-333, Asp-334–Pro-368, Asp-369–Pro-403, Glu-404–Pro-438, Asn-439–Pro-473, Asp-474–Pro-508, and Asp-509–Ile-543.

The protein belongs to the PPR family. P subfamily.

This Arabidopsis thaliana (Mouse-ear cress) protein is Pentatricopeptide repeat-containing protein At5g24830.